A 93-amino-acid polypeptide reads, in one-letter code: Integration host factor subunit beta (93 aa).

The protein belongs to the bacterial histone-like protein family. In terms of assembly, heterodimer of an alpha and a beta chain.

This protein is one of the two subunits of integration host factor, a specific DNA-binding protein that functions in genetic recombination as well as in transcriptional and translational control. This chain is Integration host factor subunit beta (ihfB), found in Cereibacter sphaeroides (strain ATCC 17023 / DSM 158 / JCM 6121 / CCUG 31486 / LMG 2827 / NBRC 12203 / NCIMB 8253 / ATH 2.4.1.) (Rhodobacter sphaeroides).